A 198-amino-acid chain; its full sequence is Putative peptidyl-prolyl cis-trans isomerase (198 aa).

Residues 14-195 (NEIKVAMHTN…HDVVIESIDV (182 aa)) form the PPIase cyclophilin-type domain.

Belongs to the cyclophilin-type PPIase family.

It catalyses the reaction [protein]-peptidylproline (omega=180) = [protein]-peptidylproline (omega=0). Functionally, PPIases accelerate the folding of proteins. It catalyzes the cis-trans isomerization of proline imidic peptide bonds in oligopeptides. This chain is Putative peptidyl-prolyl cis-trans isomerase, found in Staphylococcus haemolyticus (strain JCSC1435).